Here is a 38-residue protein sequence, read N- to C-terminus: Large ribosomal subunit protein bL36 (38 aa).

This sequence belongs to the bacterial ribosomal protein bL36 family.

This Methylacidiphilum infernorum (isolate V4) (Methylokorus infernorum (strain V4)) protein is Large ribosomal subunit protein bL36.